The sequence spans 354 residues: Methylthioribose-1-phosphate isomerase (354 aa).

Substrate is bound by residues 45 to 47 (RGA), R87, and Q204. D245 acts as the Proton donor in catalysis. 255–256 (NK) is a binding site for substrate.

The protein belongs to the eIF-2B alpha/beta/delta subunits family. MtnA subfamily.

It catalyses the reaction 5-(methylsulfanyl)-alpha-D-ribose 1-phosphate = 5-(methylsulfanyl)-D-ribulose 1-phosphate. It functions in the pathway amino-acid biosynthesis; L-methionine biosynthesis via salvage pathway; L-methionine from S-methyl-5-thio-alpha-D-ribose 1-phosphate: step 1/6. Catalyzes the interconversion of methylthioribose-1-phosphate (MTR-1-P) into methylthioribulose-1-phosphate (MTRu-1-P). This chain is Methylthioribose-1-phosphate isomerase, found in Chlorobaculum tepidum (strain ATCC 49652 / DSM 12025 / NBRC 103806 / TLS) (Chlorobium tepidum).